The sequence spans 477 residues: MDTTNSSRWSELPIDILRSLLEQKGGCAIYNPDEAKDYKTKRDSSGIRFLANSVNWFLVLDSRSNLYIIDVFSEKKIDLPPLESIKNGLYSLEQVGDEKKKEYIVVWFFDKGTEYIAFCKNGEDHYRDIPIRKNVCKELQDLYDMLLHGGNNLYISKTRQSIRKLRFFEEEGFIDVDNSEILPFRKISFYIDGARFSNNIAVTTSREVLLVQNFFYETTRYRSFRLYKKDPNPDLNATINNPYPMVELCSLGDVSASGFGDRKRSCLDMCMFNLVTKKLKRFPDLSNLKLTDARCTTTSSGNNWKFSIIVSEVIDSKFLELRFADLDSESQQQTKLKFSMLKSEFVDMNKEDSQIEINEKETKINQEHDQSDETQAKRRRSLTSSVWQDLVSVGGEANVKEIDRSMETPNSSPPWSELPGDILRSVFERLSFVDFQRAKQTCPIKRSKSNCLRLWLITFGGLERLPHLSSVCFISWT.

Residues 346–377 (VDMNKEDSQIEINEKETKINQEHDQSDETQAK) are a coiled coil. Residues 412-458 (SPPWSELPGDILRSVFERLSFVDFQRAKQTCPIKRSKSNCLRLWLIT) enclose the F-box domain.

This Arabidopsis thaliana (Mouse-ear cress) protein is Probable F-box protein At5g25300.